The sequence spans 270 residues: Phosphatidylglycerol--prolipoprotein diacylglyceryl transferase (270 aa).

4 helical membrane passes run 18-38 (ITIY…LWLA), 55-75 (LVLF…VLFE), 90-110 (WQGG…GAVF), and 115-135 (GLSF…GQAI). Arginine 137 contacts a 1,2-diacyl-sn-glycero-3-phospho-(1'-sn-glycerol). 3 consecutive transmembrane segments (helical) span residues 177 to 197 (HPTF…LLWL), 205 to 225 (GELF…IEGM), and 236 to 256 (LRAA…LWIV).

Belongs to the Lgt family.

It is found in the cell membrane. The enzyme catalyses L-cysteinyl-[prolipoprotein] + a 1,2-diacyl-sn-glycero-3-phospho-(1'-sn-glycerol) = an S-1,2-diacyl-sn-glyceryl-L-cysteinyl-[prolipoprotein] + sn-glycerol 1-phosphate + H(+). It functions in the pathway protein modification; lipoprotein biosynthesis (diacylglyceryl transfer). Catalyzes the transfer of the diacylglyceryl group from phosphatidylglycerol to the sulfhydryl group of the N-terminal cysteine of a prolipoprotein, the first step in the formation of mature lipoproteins. The sequence is that of Phosphatidylglycerol--prolipoprotein diacylglyceryl transferase from Geobacillus kaustophilus (strain HTA426).